A 192-amino-acid chain; its full sequence is Secreted phosphoprotein 24 (192 aa).

Positions 1–29 (MGKTPEDFERHTMRSLIFVLALSVFTCSG) are cleaved as a signal peptide. Intrachain disulfides connect Cys-92–Cys-103 and Cys-116–Cys-134. The segment at 155–192 (TDPRKRGSSRSEAFSSRGRGHSNGDWRKPDYTSPGKVE) is disordered.

The protein belongs to the SPP2 family. Post-translationally, multiply phosphorylated at serine residues.

The protein localises to the secreted. Functionally, could coordinate an aspect of bone turnover. In Gallus gallus (Chicken), this protein is Secreted phosphoprotein 24 (SPP2).